A 937-amino-acid chain; its full sequence is Protein translocase subunit SecA (937 aa).

ATP is bound by residues Gln90, 108–112 (GEGKT), and Asp509.

It belongs to the SecA family. Monomer and homodimer. Part of the essential Sec protein translocation apparatus which comprises SecA, SecYEG and auxiliary proteins SecDF. Other proteins may also be involved.

It localises to the cell inner membrane. The protein resides in the cellular thylakoid membrane. It is found in the cytoplasm. It catalyses the reaction ATP + H2O + cellular proteinSide 1 = ADP + phosphate + cellular proteinSide 2.. Part of the Sec protein translocase complex. Interacts with the SecYEG preprotein conducting channel. Has a central role in coupling the hydrolysis of ATP to the transfer of proteins into and across the cell membrane, serving as an ATP-driven molecular motor driving the stepwise translocation of polypeptide chains across the membrane. Functionally, probably participates in protein translocation into and across both the cytoplasmic and thylakoid membranes in cyanobacterial cells. The chain is Protein translocase subunit SecA from Parasynechococcus marenigrum (strain WH8102).